We begin with the raw amino-acid sequence, 81 residues long: Large ribosomal subunit protein bL27 (81 aa).

The segment covering 1–11 (MATSKSGGSSK) has biased composition (polar residues). The segment at 1 to 23 (MATSKSGGSSKNGRDSISKRLGV) is disordered.

This sequence belongs to the bacterial ribosomal protein bL27 family.

The polypeptide is Large ribosomal subunit protein bL27 (Borrelia garinii subsp. bavariensis (strain ATCC BAA-2496 / DSM 23469 / PBi) (Borreliella bavariensis)).